Consider the following 295-residue polypeptide: Bifunctional protein FolD (295 aa).

NADP(+) is bound by residues 166 to 168 (GRS), Ser191, and Ile232.

It belongs to the tetrahydrofolate dehydrogenase/cyclohydrolase family. In terms of assembly, homodimer.

The enzyme catalyses (6R)-5,10-methylene-5,6,7,8-tetrahydrofolate + NADP(+) = (6R)-5,10-methenyltetrahydrofolate + NADPH. It catalyses the reaction (6R)-5,10-methenyltetrahydrofolate + H2O = (6R)-10-formyltetrahydrofolate + H(+). The protein operates within one-carbon metabolism; tetrahydrofolate interconversion. Catalyzes the oxidation of 5,10-methylenetetrahydrofolate to 5,10-methenyltetrahydrofolate and then the hydrolysis of 5,10-methenyltetrahydrofolate to 10-formyltetrahydrofolate. This is Bifunctional protein FolD from Rhodopseudomonas palustris (strain BisB5).